A 400-amino-acid polypeptide reads, in one-letter code: Diphosphomevalonate decarboxylase (400 aa).

Residue alanine 2 is modified to N-acetylalanine. Residues 23–26 (YWGK), arginine 78, 156–161 (SGSACR), and threonine 212 each bind (R)-5-diphosphomevalonate.

The protein belongs to the diphosphomevalonate decarboxylase family. As to quaternary structure, homodimer.

It localises to the cytoplasm. The catalysed reaction is (R)-5-diphosphomevalonate + ATP = isopentenyl diphosphate + ADP + phosphate + CO2. It participates in steroid biosynthesis; cholesterol biosynthesis. In terms of biological role, catalyzes the ATP dependent decarboxylation of (R)-5-diphosphomevalonate to form isopentenyl diphosphate (IPP). Functions in the mevalonate (MVA) pathway leading to isopentenyl diphosphate (IPP), a key precursor for the biosynthesis of isoprenoids and sterol synthesis. This Bos taurus (Bovine) protein is Diphosphomevalonate decarboxylase (MVD).